The sequence spans 523 residues: Putative glucosylceramidase 1 (523 aa).

A signal peptide spans 1–23 (MKSRFLLKIFIFLAVFGVDSVRA). Asn168 carries an N-linked (GlcNAc...) asparagine glycan. Glu358 acts as the Nucleophile in catalysis.

This sequence belongs to the glycosyl hydrolase 30 family.

It carries out the reaction a beta-D-glucosylceramide + H2O = an N-acyl-sphingoid base + D-glucose. The catalysed reaction is a beta-D-glucosyl-(1&lt;-&gt;1')-N-acylsphing-4-enine + H2O = an N-acylsphing-4-enine + D-glucose. It catalyses the reaction an N-acyl-1-beta-D-glucosyl-15-methylhexadecasphing-4-enine + H2O = an N-acyl-15-methylhexadecasphing-4-enine + D-glucose. The protein operates within lipid metabolism; sphingolipid metabolism. Its function is as follows. Glucosylceramidase that catalyzes the hydrolysis of glucosylceramides into free ceramides and glucose. C.elegans contains specific sphingoid bases, which are unique or different in structure compared to the sphingoid bases found in other animals. Two examples of these distinctive compounds are: 15-methylhexadecasphinganine and 15-methylhexadecasphing-4-enine. The chain is Putative glucosylceramidase 1 (gba-1) from Caenorhabditis elegans.